The sequence spans 132 residues: uncharacterized protein (132 aa).

A signal peptide spans 1–17; that stretch reads MCPECFFLMLFFCGYRA. Residues 25–39 are compositionally biased toward low complexity; the sequence is SSSSSSSSSSSFRSS. Positions 25–79 are disordered; that stretch reads SSSSSSSSSSSFRSSPAYGFSGRPPGGAGCRERSQRSCLRPGGLPSLTRNPGLQR.

This is an uncharacterized protein from Escherichia coli (strain K12).